The primary structure comprises 556 residues: Arginine--tRNA ligase (556 aa).

Residues 132 to 142 carry the 'HIGH' region motif; sequence ANPTGDLHLGH.

It belongs to the class-I aminoacyl-tRNA synthetase family. As to quaternary structure, monomer.

Its subcellular location is the cytoplasm. It catalyses the reaction tRNA(Arg) + L-arginine + ATP = L-arginyl-tRNA(Arg) + AMP + diphosphate. The protein is Arginine--tRNA ligase of Bacillus cereus (strain ATCC 14579 / DSM 31 / CCUG 7414 / JCM 2152 / NBRC 15305 / NCIMB 9373 / NCTC 2599 / NRRL B-3711).